The chain runs to 100 residues: Phosphoribosylformylglycinamidine synthase subunit PurS (100 aa).

This sequence belongs to the PurS family. In terms of assembly, homodimer. Part of the FGAM synthase complex composed of 1 PurL, 1 PurQ and 2 PurS subunits.

The protein resides in the cytoplasm. It catalyses the reaction N(2)-formyl-N(1)-(5-phospho-beta-D-ribosyl)glycinamide + L-glutamine + ATP + H2O = 2-formamido-N(1)-(5-O-phospho-beta-D-ribosyl)acetamidine + L-glutamate + ADP + phosphate + H(+). It participates in purine metabolism; IMP biosynthesis via de novo pathway; 5-amino-1-(5-phospho-D-ribosyl)imidazole from N(2)-formyl-N(1)-(5-phospho-D-ribosyl)glycinamide: step 1/2. Part of the phosphoribosylformylglycinamidine synthase complex involved in the purines biosynthetic pathway. Catalyzes the ATP-dependent conversion of formylglycinamide ribonucleotide (FGAR) and glutamine to yield formylglycinamidine ribonucleotide (FGAM) and glutamate. The FGAM synthase complex is composed of three subunits. PurQ produces an ammonia molecule by converting glutamine to glutamate. PurL transfers the ammonia molecule to FGAR to form FGAM in an ATP-dependent manner. PurS interacts with PurQ and PurL and is thought to assist in the transfer of the ammonia molecule from PurQ to PurL. This Synechocystis sp. (strain ATCC 27184 / PCC 6803 / Kazusa) protein is Phosphoribosylformylglycinamidine synthase subunit PurS.